Here is a 358-residue protein sequence, read N- to C-terminus: 3-isopropylmalate dehydrogenase (358 aa).

Substrate contacts are provided by R92, R102, R130, and D224. Residues D224, D248, and D252 each contribute to the Mg(2+) site. Residue 282–294 participates in NAD(+) binding; that stretch reads GSAPDIAGQGIAN.

This sequence belongs to the isocitrate and isopropylmalate dehydrogenases family. LeuB type 1 subfamily. Homodimer. The cofactor is Mg(2+). It depends on Mn(2+) as a cofactor.

Its subcellular location is the cytoplasm. It carries out the reaction (2R,3S)-3-isopropylmalate + NAD(+) = 4-methyl-2-oxopentanoate + CO2 + NADH. Its pathway is amino-acid biosynthesis; L-leucine biosynthesis; L-leucine from 3-methyl-2-oxobutanoate: step 3/4. Catalyzes the oxidation of 3-carboxy-2-hydroxy-4-methylpentanoate (3-isopropylmalate) to 3-carboxy-4-methyl-2-oxopentanoate. The product decarboxylates to 4-methyl-2 oxopentanoate. The protein is 3-isopropylmalate dehydrogenase of Bordetella avium (strain 197N).